The sequence spans 352 residues: MEDGKKAASMSAEKQKALAAALAQIEKQFGKGSIMKMGDAEVEPVQVVSTGSLGLDVALGVGGLPRGRVVEIYGPESSGKTTLTLQVVAEMQKLGGTCAFIDAEHALDVTYADKLGVKVPDLLISQPDTGEQALEIADALVRSGSVDLIVIDSVAALVPKAEIEGEMGDALPGLQARLMSQALRKLTGTIKRTNCLVIFINQIRMKIGVMFGSPETTTGGNALKFYASVRLDIRRIGSIKKGDEVVGNETKVKVVKNKVAPPFREAIFDILYGAGVSREGEIIDLGVEAKVVEKSGAWYSYNGERIGQGRDNCREFLRENAELAREIENKVREHLGVTPMGAVTLAEEVEED.

74-81 (GPESSGKT) is an ATP binding site.

The protein belongs to the RecA family.

Its subcellular location is the cytoplasm. Its function is as follows. Can catalyze the hydrolysis of ATP in the presence of single-stranded DNA, the ATP-dependent uptake of single-stranded DNA by duplex DNA, and the ATP-dependent hybridization of homologous single-stranded DNAs. It interacts with LexA causing its activation and leading to its autocatalytic cleavage. The polypeptide is Protein RecA (Ralstonia nicotianae (strain ATCC BAA-1114 / GMI1000) (Ralstonia solanacearum)).